The sequence spans 394 residues: RILP-like protein 1 (394 aa).

The region spanning 2–89 (EGISALEKNV…RLERMDRIEK (88 aa)) is the RH1 domain. A coiled-coil region spans residues 68–327 (EMEELRLELD…EAEEENKLPQ (260 aa)). The RH2 domain occupies 282–347 (RPRFTLQELR…IPQESGIKRL (66 aa)).

It belongs to the RILPL family.

Its subcellular location is the cytoplasm. The protein resides in the cytosol. The protein localises to the cytoskeleton. It is found in the microtubule organizing center. It localises to the centrosome. Its subcellular location is the cell projection. The protein resides in the cilium. Its function is as follows. Plays a role in the regulation of cell shape and polarity. Plays a role in cellular protein transport, including protein transport away from primary cilia. Neuroprotective protein. The protein is RILP-like protein 1 (rilpl1) of Xenopus laevis (African clawed frog).